We begin with the raw amino-acid sequence, 339 residues long: D-erythrose-4-phosphate dehydrogenase (339 aa).

11 to 12 (RI) lines the NAD(+) pocket. Substrate is bound by residues 158 to 160 (SCT), Arg-204, 217 to 218 (TK), and Arg-240. The active-site Nucleophile is Cys-159. Asn-322 lines the NAD(+) pocket.

The protein belongs to the glyceraldehyde-3-phosphate dehydrogenase family. Epd subfamily. As to quaternary structure, homotetramer.

Its subcellular location is the cytoplasm. It carries out the reaction D-erythrose 4-phosphate + NAD(+) + H2O = 4-phospho-D-erythronate + NADH + 2 H(+). It functions in the pathway cofactor biosynthesis; pyridoxine 5'-phosphate biosynthesis; pyridoxine 5'-phosphate from D-erythrose 4-phosphate: step 1/5. Catalyzes the NAD-dependent conversion of D-erythrose 4-phosphate to 4-phosphoerythronate. The chain is D-erythrose-4-phosphate dehydrogenase from Aliivibrio salmonicida (strain LFI1238) (Vibrio salmonicida (strain LFI1238)).